A 361-amino-acid polypeptide reads, in one-letter code: Transcription factor TCP10 (361 aa).

One can recognise a TCP domain in the interval Arg29 to Leu87. Disordered stretches follow at residues Asp220–Met259 and Ser295–Ala317. Over residues Ser295–Asp304 the composition is skewed to basic and acidic residues.

Interacts with AHP1, AHP2 and AHP3. Interacts with SPL. As to expression, mostly detected in lateral organs, such as leaves and flowers. Expressed in cotyledons, particularly in the vascular region, in leaves, roots, stems, buds, flowers and immature siliques.

The protein resides in the nucleus. Its function is as follows. Plays a pivotal role in the control of morphogenesis of shoot organs by negatively regulating the expression of boundary-specific genes such as CUC genes, probably through the induction of miRNA (e.g. miR164). Participates in ovule development. This chain is Transcription factor TCP10 (TCP10), found in Arabidopsis thaliana (Mouse-ear cress).